A 239-amino-acid chain; its full sequence is Ribonuclease PH (239 aa).

Phosphate contacts are provided by residues Arg86 and 124 to 126 (GTR).

Belongs to the RNase PH family. As to quaternary structure, homohexameric ring arranged as a trimer of dimers.

The enzyme catalyses tRNA(n+1) + phosphate = tRNA(n) + a ribonucleoside 5'-diphosphate. Its function is as follows. Phosphorolytic 3'-5' exoribonuclease that plays an important role in tRNA 3'-end maturation. Removes nucleotide residues following the 3'-CCA terminus of tRNAs; can also add nucleotides to the ends of RNA molecules by using nucleoside diphosphates as substrates, but this may not be physiologically important. Probably plays a role in initiation of 16S rRNA degradation (leading to ribosome degradation) during starvation. This chain is Ribonuclease PH, found in Rickettsia felis (strain ATCC VR-1525 / URRWXCal2) (Rickettsia azadi).